The following is a 554-amino-acid chain: CTP synthase (554 aa).

Positions 1 to 270 (MTKFVFVTGG…DGLICDKLRL (270 aa)) are amidoligase domain. Serine 13 is a binding site for CTP. Serine 13 is a binding site for UTP. Residues 14–19 (SLGKGI) and aspartate 71 contribute to the ATP site. Mg(2+) contacts are provided by aspartate 71 and glutamate 144. Residues 151 to 153 (DIE), 191 to 196 (KTKPTQ), and lysine 227 contribute to the CTP site. Residues 191–196 (KTKPTQ) and lysine 227 each bind UTP. The 254-residue stretch at 295–548 (TVAMVGKYVD…IAAAKARHQA (254 aa)) folds into the Glutamine amidotransferase type-1 domain. Glycine 357 serves as a coordination point for L-glutamine. Catalysis depends on cysteine 384, which acts as the Nucleophile; for glutamine hydrolysis. L-glutamine-binding positions include 385–388 (LGMQ), glutamate 408, and arginine 474. Catalysis depends on residues histidine 521 and glutamate 523.

It belongs to the CTP synthase family. As to quaternary structure, homotetramer.

The enzyme catalyses UTP + L-glutamine + ATP + H2O = CTP + L-glutamate + ADP + phosphate + 2 H(+). It carries out the reaction L-glutamine + H2O = L-glutamate + NH4(+). The catalysed reaction is UTP + NH4(+) + ATP = CTP + ADP + phosphate + 2 H(+). It functions in the pathway pyrimidine metabolism; CTP biosynthesis via de novo pathway; CTP from UDP: step 2/2. Its activity is regulated as follows. Allosterically activated by GTP, when glutamine is the substrate; GTP has no effect on the reaction when ammonia is the substrate. The allosteric effector GTP functions by stabilizing the protein conformation that binds the tetrahedral intermediate(s) formed during glutamine hydrolysis. Inhibited by the product CTP, via allosteric rather than competitive inhibition. Functionally, catalyzes the ATP-dependent amination of UTP to CTP with either L-glutamine or ammonia as the source of nitrogen. Regulates intracellular CTP levels through interactions with the four ribonucleotide triphosphates. This Verminephrobacter eiseniae (strain EF01-2) protein is CTP synthase.